A 102-amino-acid polypeptide reads, in one-letter code: Small ribosomal subunit protein uS10 (102 aa).

This sequence belongs to the universal ribosomal protein uS10 family. As to quaternary structure, part of the 30S ribosomal subunit.

Functionally, involved in the binding of tRNA to the ribosomes. This Arthrobacter sp. (strain FB24) protein is Small ribosomal subunit protein uS10.